The sequence spans 368 residues: Protein tesmin/TSO1-like CXC 8 (368 aa).

Residues 64–185 (KHKGCRCKQS…KCINCKNVSE (122 aa)) enclose the CRC domain.

This sequence belongs to the lin-54 family.

The protein resides in the nucleus. Its function is as follows. Plays a role in development of both male and female reproductive tissues. The chain is Protein tesmin/TSO1-like CXC 8 (TCX8) from Arabidopsis thaliana (Mouse-ear cress).